We begin with the raw amino-acid sequence, 79 residues long: UPF0181 protein PC1_1931 (79 aa).

Positions 54-79 (FDEDDDTVNDSDEEHYFDDGEEEDEQ) are disordered.

Belongs to the UPF0181 family.

The polypeptide is UPF0181 protein PC1_1931 (Pectobacterium carotovorum subsp. carotovorum (strain PC1)).